The following is a 116-amino-acid chain: Large ribosomal subunit protein bL17 (116 aa).

Belongs to the bacterial ribosomal protein bL17 family. As to quaternary structure, part of the 50S ribosomal subunit. Contacts protein L32.

The polypeptide is Large ribosomal subunit protein bL17 (Rippkaea orientalis (strain PCC 8801 / RF-1) (Cyanothece sp. (strain PCC 8801))).